The primary structure comprises 82 residues: Putative membrane protein insertion efficiency factor (82 aa).

The protein belongs to the UPF0161 family.

Its subcellular location is the cell inner membrane. Its function is as follows. Could be involved in insertion of integral membrane proteins into the membrane. The chain is Putative membrane protein insertion efficiency factor from Rickettsia massiliae (strain Mtu5).